Reading from the N-terminus, the 152-residue chain is Arginine repressor (152 aa).

Belongs to the ArgR family.

Its subcellular location is the cytoplasm. The protein operates within amino-acid biosynthesis; L-arginine biosynthesis [regulation]. Regulates arginine biosynthesis genes. The sequence is that of Arginine repressor from Caldicellulosiruptor saccharolyticus (strain ATCC 43494 / DSM 8903 / Tp8T 6331).